The following is a 230-amino-acid chain: Mitochondrial intermembrane space import and assembly protein 40 (230 aa).

The transit peptide at 1–18 (MFARSFSNASRTIARRSL) directs the protein to the mitochondrion. Residues 1–22 (MFARSFSNASRTIARRSLSTRS) show a composition bias toward polar residues. Residues 1–30 (MFARSFSNASRTIARRSLSTRSGPAPSSLW) are disordered. The Mitochondrial matrix portion of the chain corresponds to 19 to 34 (STRSGPAPSSLWSSRN). The chain crosses the membrane as a helical; Signal-anchor for type II membrane protein span at residues 35 to 51 (AVIAGTTLAITALAVTS). Residues 52–230 (ERRKVFNESA…EETAAPAAAP (179 aa)) are Mitochondrial intermembrane-facing. Residues 58-111 (NESAQKATSPRDSIIAQDSLKENVHKKSVRQDEFSGESTKPEASTSSDSVEKAA) are disordered. Residues 59-68 (ESAQKATSPR) show a composition bias toward polar residues. Positions 76–90 (SLKENVHKKSVRQDE) are enriched in basic and acidic residues. Residues 93 to 105 (GESTKPEASTSSD) show a composition bias toward polar residues. Disulfide bonds link cysteine 144-cysteine 146, cysteine 155-cysteine 188, and cysteine 165-cysteine 178. Positions 152 to 196 (TGPCGEQFKAAFSCFVYSEAEPKGVDCVELFKVMQDCFREHPEIY) constitute a CHCH domain. 2 consecutive short sequence motifs (cx9C motif) follow at residues 155-165 (CGEQFKAAFSC) and 178-188 (CVELFKVMQDC). Residues 195-230 (IYGEEIDDDEAPAQEGTMEEKVEAAKEETAAPAAAP) are disordered. The segment covering 196–206 (YGEEIDDDEAP) has biased composition (acidic residues). Positions 212–223 (MEEKVEAAKEET) are enriched in basic and acidic residues.

As to quaternary structure, monomer. Cu(2+) is required as a cofactor. Zn(2+) serves as cofactor.

It localises to the mitochondrion inner membrane. Its function is as follows. Required for the import and folding of small cysteine-containing proteins (small Tim) in the mitochondrial intermembrane space (IMS). Forms a redox cycle with ERV1 that involves a disulfide relay system. Precursor proteins to be imported into the IMS are translocated in their reduced form into the mitochondria. The oxidized form of MIA40 forms a transient intermolecular disulfide bridge with the reduced precursor protein, resulting in oxidation of the precursor protein that now contains an intramolecular disulfide bond and is able to undergo folding in the IMS. This chain is Mitochondrial intermembrane space import and assembly protein 40 (MIA40), found in Cryptococcus neoformans var. neoformans serotype D (strain JEC21 / ATCC MYA-565) (Filobasidiella neoformans).